Reading from the N-terminus, the 129-residue chain is Large ribosomal subunit protein bL20 (129 aa).

Belongs to the bacterial ribosomal protein bL20 family.

Functionally, binds directly to 23S ribosomal RNA and is necessary for the in vitro assembly process of the 50S ribosomal subunit. It is not involved in the protein synthesizing functions of that subunit. The polypeptide is Large ribosomal subunit protein bL20 (Mycobacterium marinum (strain ATCC BAA-535 / M)).